Reading from the N-terminus, the 422-residue chain is Interleukin-11 receptor subunit alpha (422 aa).

The first 22 residues, 1–22 (MSSSCSGLSRVLVAVATALVSA), serve as a signal peptide directing secretion. The Extracellular portion of the chain corresponds to 24–370 (SPCPQAWGPP…DSVEQVAVLV (347 aa)). The 84-residue stretch at 27 to 110 (PQAWGPPGVQ…LGGTVTLQLG (84 aa)) folds into the Ig-like C2-type domain. 3 disulfide bridges follow: cysteine 48/cysteine 94, cysteine 120/cysteine 130, and cysteine 170/cysteine 180. Fibronectin type-III domains lie at 112–219 (PPAR…LRPD) and 220–317 (PPQG…TPST). Asparagine 127 carries N-linked (GlcNAc...) asparagine glycosylation. A glycan (N-linked (GlcNAc...) asparagine) is linked at asparagine 194. A WSXWS motif motif is present at residues 304–308 (WSTWS). The segment at 335–355 (EVEPQVDSPAPPRPSLQPHPR) is disordered. A helical membrane pass occupies residues 371-391 (SLGILSFLGLVAGALALGLWL). Residues 392 to 422 (RLRRGGKDGSPKPGFLASVIPVDRHPGAPNL) lie on the Cytoplasmic side of the membrane.

This sequence belongs to the type I cytokine receptor family. Type 3 subfamily. In terms of assembly, on IL11 binding, forms a multimer complex with IL6ST/gp130. Post-translationally, a short soluble form is also released from the membrane by proteolysis. The sIL11RA is formed either by limited proteolysis of membrane-bound receptors, a process referred to as ectodomain shedding, or directly secreted from the cells after alternative mRNA splicing. mIL11RA is cleaved by the proteases ADAM10, ELANE and PRTN3.

The protein localises to the membrane. It localises to the secreted. Functionally, receptor for interleukin-11 (IL11). The receptor systems for IL6, LIF, OSM, CNTF, IL11 and CT1 can utilize IL6ST for initiating signal transmission. The IL11/IL11RA/IL6ST complex may be involved in the control of proliferation and/or differentiation of skeletogenic progenitor or other mesenchymal cells. Essential for the normal development of craniofacial bones and teeth. Restricts suture fusion and tooth number. Soluble form of IL11 receptor (sIL11RA) that acts as an agonist of IL11 activity. The IL11:sIL11RA complex binds to IL6ST/gp130 on cell surfaces and induces signaling also on cells that do not express membrane-bound IL11RA in a process called IL11 trans-signaling. The polypeptide is Interleukin-11 receptor subunit alpha (IL11RA) (Pongo abelii (Sumatran orangutan)).